The primary structure comprises 195 residues: Dihydroneopterin triphosphate diphosphatase (195 aa).

Asp73 functions as the Proton acceptor in the catalytic mechanism.

Belongs to the HAM1 NTPase family. It depends on Mn(2+) as a cofactor.

It catalyses the reaction 7,8-dihydroneopterin 3'-triphosphate + H2O = 7,8-dihydroneopterin 3'-phosphate + diphosphate + H(+). The protein operates within cofactor biosynthesis; tetrahydrofolate biosynthesis. Its function is as follows. Pyrophosphatase involved in the biosynthesis of tetrahydrofolate. Catalyzes the hydrolysis of dihydroneopterin triphosphate (DHNTP) to dihydroneopterin monophosphate (DHNMP) and pyrophosphate. Shows a strict substrate specificity. Has only weak activity with GTP, ITP, XTP and dTTP, and cannot use ATP, UTP, CTP, NAD(+), NADH, diadenosine triphosphate, diadenosine tetraphosphate, ADP-ribose and UDP-glucose. The protein is Dihydroneopterin triphosphate diphosphatase of Limosilactobacillus reuteri (strain DSM 20016) (Lactobacillus reuteri).